A 302-amino-acid polypeptide reads, in one-letter code: Homoserine O-acetyltransferase (302 aa).

Cysteine 142 functions as the Acyl-thioester intermediate in the catalytic mechanism. Lysine 163 and serine 192 together coordinate substrate. The Proton acceptor role is filled by histidine 235. Glutamate 237 is an active-site residue. Arginine 249 is a substrate binding site.

Belongs to the MetA family.

It localises to the cytoplasm. It catalyses the reaction L-homoserine + acetyl-CoA = O-acetyl-L-homoserine + CoA. It functions in the pathway amino-acid biosynthesis; L-methionine biosynthesis via de novo pathway; O-acetyl-L-homoserine from L-homoserine: step 1/1. Transfers an acetyl group from acetyl-CoA to L-homoserine, forming acetyl-L-homoserine. The polypeptide is Homoserine O-acetyltransferase (Bacillus licheniformis (strain ATCC 14580 / DSM 13 / JCM 2505 / CCUG 7422 / NBRC 12200 / NCIMB 9375 / NCTC 10341 / NRRL NRS-1264 / Gibson 46)).